Reading from the N-terminus, the 86-residue chain is Small ribosomal subunit protein bS16 (86 aa).

The protein belongs to the bacterial ribosomal protein bS16 family.

This is Small ribosomal subunit protein bS16 from Leptothrix cholodnii (strain ATCC 51168 / LMG 8142 / SP-6) (Leptothrix discophora (strain SP-6)).